A 222-amino-acid chain; its full sequence is Tetratricopeptide repeat protein 9A (222 aa).

Disordered stretches follow at residues 1 to 49 (MERK…AAAE) and 88 to 116 (KGLL…GRLS). One copy of the TPR 1 repeat lies at 56 to 89 (RAHEFKSQGAQCYKDKKFREAIGKYHRALLELKG). Position 105 is a phosphoserine (Ser105). TPR repeat units follow at residues 125-160 (AIEI…LKKE) and 161-194 (GENF…RTQQ).

It belongs to the TTC9 family.

The polypeptide is Tetratricopeptide repeat protein 9A (TTC9) (Homo sapiens (Human)).